Consider the following 571-residue polypeptide: Cyclic di-GMP phosphodiesterase TpdA (571 aa).

Helical transmembrane passes span 155-175 (IAWV…YAIN), 321-341 (VYYI…FLVI), and 395-415 (TLIS…AIYA). Positions 344-571 (HRSLQAFITY…HQGYFYPLHF (228 aa)) constitute an EAL domain.

It localises to the cell inner membrane. It catalyses the reaction 3',3'-c-di-GMP + H2O = 5'-phosphoguanylyl(3'-&gt;5')guanosine + H(+). Its function is as follows. Cyclic di-GMP phosphodiesterase that plays an important role in modulating the global c-di-GMP pool. Its ability to alter the c-di-GMP pool has an effect on swimming motility, swarming motility and biofilm formation, multicellular behaviors that are important for the survival and dissemination of this environmental pathogen. Exhibits a dual function, namely, c-di-GMP degradation and modulation of its own expression. The polypeptide is Cyclic di-GMP phosphodiesterase TpdA (Vibrio parahaemolyticus serotype O3:K6 (strain RIMD 2210633)).